The following is a 217-amino-acid chain: Adenylate kinase (217 aa).

10–15 (GAGKGT) contacts ATP. The segment at 30 to 59 (STGDMFRAAMKEETPLGLEAKSYIDKGELV) is NMP. Residues T31, R36, 57-59 (ELV), 85-88 (GFPR), and Q92 contribute to the AMP site. The segment at 126-163 (GRRICSVCGTTYHLVFNPPKTPGICDKDGGELYQRADD) is LID. R127 is an ATP binding site. 2 residues coordinate Zn(2+): C130 and C133. Position 136 to 137 (136 to 137 (TY)) interacts with ATP. 2 residues coordinate Zn(2+): C150 and D153. Positions 160 and 171 each coordinate AMP. An ATP-binding site is contributed by Q199.

This sequence belongs to the adenylate kinase family. Monomer.

It localises to the cytoplasm. The catalysed reaction is AMP + ATP = 2 ADP. Its pathway is purine metabolism; AMP biosynthesis via salvage pathway; AMP from ADP: step 1/1. Functionally, catalyzes the reversible transfer of the terminal phosphate group between ATP and AMP. Plays an important role in cellular energy homeostasis and in adenine nucleotide metabolism. The sequence is that of Adenylate kinase from Bacillus subtilis (strain 168).